The primary structure comprises 137 residues: MAEFELEVLQPERVFFKDNVEMIVLRTIDGEIGIMANHQPIVVPIGIGKLRIKKDGKWREAAIAGGLLEVKNNKATILSDAVEWPEEIDRQRALLAKERAEKRLEQKLPPDEYERYRAALYRALNRLKLAEENKEEI.

This sequence belongs to the ATPase epsilon chain family. F-type ATPases have 2 components, CF(1) - the catalytic core - and CF(0) - the membrane proton channel. CF(1) has five subunits: alpha(3), beta(3), gamma(1), delta(1), epsilon(1). CF(0) has three main subunits: a, b and c.

It localises to the cell membrane. In terms of biological role, produces ATP from ADP in the presence of a proton gradient across the membrane. The protein is ATP synthase epsilon chain of Caldicellulosiruptor bescii (strain ATCC BAA-1888 / DSM 6725 / KCTC 15123 / Z-1320) (Anaerocellum thermophilum).